The primary structure comprises 399 residues: Accessory Sec system protein translocase subunit SecY2 (399 aa).

The next 10 membrane-spanning stretches (helical) occupy residues 14 to 34 (ILFT…SIVG), 60 to 80 (LNVF…IMLL), 102 to 122 (IITI…YIHN), 128 to 148 (SNII…VWLA), 152 to 172 (ITYG…KSLF), 184 to 204 (VLLL…LLFI), 238 to 258 (ISIM…NLIA), 272 to 292 (FANP…SYLL), 335 to 355 (WTGA…TLLV), and 362 to 382 (IYFS…GETI).

Belongs to the SecY/SEC61-alpha family. SecY2 subfamily. In terms of assembly, component of the accessory SecA2/SecY2 protein translocase complex required to export cell wall proteins. May form heterotrimers with SecE and SecG subunits.

Its subcellular location is the cell membrane. Part of the accessory SecA2/SecY2 system specifically required for export of possible cell wall proteins. The central subunit of a protein translocation channel. This Staphylococcus haemolyticus (strain JCSC1435) protein is Accessory Sec system protein translocase subunit SecY2.